The chain runs to 419 residues: 2-amino-3-ketobutyrate coenzyme A ligase, mitochondrial (419 aa).

The N-terminal 21 residues, 1–21 (MWPGNAWRAALFWVPRGRRAQ), are a transit peptide targeting the mitochondrion. Lysine 45 bears the N6-acetyllysine; alternate mark. Lysine 45 carries the post-translational modification N6-succinyllysine; alternate. A pyridoxal 5'-phosphate-binding site is contributed by 134 to 135 (CY). Histidine 159 provides a ligand contact to substrate. Lysine 187 carries the N6-acetyllysine; alternate modification. Lysine 187 carries the post-translational modification N6-succinyllysine; alternate. Residues serine 206, 262 to 265 (TLGK), and 295 to 296 (SN) contribute to the pyridoxal 5'-phosphate site. Lysine 265 bears the N6-(pyridoxal phosphate)lysine mark. An N6-succinyllysine mark is found at lysine 326 and lysine 368. Lysine 383 carries the N6-acetyllysine; alternate modification. Lysine 383 bears the N6-succinyllysine; alternate mark. Arginine 389 serves as a coordination point for substrate.

Belongs to the class-II pyridoxal-phosphate-dependent aminotransferase family. The cofactor is pyridoxal 5'-phosphate. In terms of tissue distribution, strongly expressed in heart, brain, liver and pancreas. Also found in lung.

It localises to the mitochondrion. Its subcellular location is the nucleus. The enzyme catalyses glycine + acetyl-CoA = (2S)-2-amino-3-oxobutanoate + CoA. Functionally, pyridoxal phosphate (PLP) dependent enzyme, which catalyzes the cleavage of 2-amino-3-oxobutanoate to glycine and acetyl-CoA. This Homo sapiens (Human) protein is 2-amino-3-ketobutyrate coenzyme A ligase, mitochondrial.